The sequence spans 575 residues: 4-substituted benzoates-glutamate ligase GH3.12 (575 aa).

Residues 6 to 33 are a coiled coil; the sequence is DINETFEKQLKDLTSNVKSIQDNLLEEI. 95–96 is a binding site for AMP; it reads SS. Salicylate is bound at residue 120–123; the sequence is YDLR. Threonine 301, threonine 324, serine 328, tyrosine 347, aspartate 398, and arginine 417 together coordinate AMP.

This sequence belongs to the IAA-amido conjugating enzyme family. Interacts with the P.syringae pv. maculicola effector HopW1-1 (via C-terminus). As to expression, expressed in seedlings, mostly in cotyledons, leaves, hypocotyls and sporadically in roots. Not detected in unchallenged adult plants, except in flowers.

With respect to regulation, specifically and reversibly inhibited by salicylic acid (SA). Catalyzes the conjugation of specific amino acids (e.g. Glu and possibly His, Lys, and Met) to their preferred acyl substrates (e.g. 4-substituted benzoates), in a magnesium ion- and ATP-dependent manner. Can use 4-substituted benzoates such as 4-aminobenzoate (pABA), 4-fluorobenzoate and 4-hydroxybenzoate (4-HBA), and, to a lesser extent, benzoate, vanillate and trans-cinnamate, but not 2-substituted benzoates and salicylic acid (SA), as conjugating acyl substrates. Involved in both basal and induced resistance in a SA-dependent manner. Confers resistance to virulent and avirulent pathogens (at least bacteria and oomycetes), and promotes SA glucosides accumulation. Required for the establishment of hyper-sensitive response (HR) upon incompatible interaction and subsequent systemic acquired resistance (SAR). The protein is 4-substituted benzoates-glutamate ligase GH3.12 (GH3.12) of Arabidopsis thaliana (Mouse-ear cress).